The chain runs to 35 residues: Photosystem II reaction center protein T (35 aa).

Residues 3 to 23 (ALVYTFLLVSTLGIIFFAIFF) traverse the membrane as a helical segment.

It belongs to the PsbT family. As to quaternary structure, PSII is composed of 1 copy each of membrane proteins PsbA, PsbB, PsbC, PsbD, PsbE, PsbF, PsbH, PsbI, PsbJ, PsbK, PsbL, PsbM, PsbT, PsbY, PsbZ, Psb30/Ycf12, at least 3 peripheral proteins of the oxygen-evolving complex and a large number of cofactors. It forms dimeric complexes.

The protein localises to the plastid. It localises to the chloroplast thylakoid membrane. Found at the monomer-monomer interface of the photosystem II (PS II) dimer, plays a role in assembly and dimerization of PSII. PSII is a light-driven water plastoquinone oxidoreductase, using light energy to abstract electrons from H(2)O, generating a proton gradient subsequently used for ATP formation. The sequence is that of Photosystem II reaction center protein T from Oenothera argillicola (Appalachian evening primrose).